The following is a 311-amino-acid chain: Protein MGF 360-16R (311 aa).

It belongs to the asfivirus MGF 360 family.

Plays a role in virus cell tropism, and may be required for efficient virus replication in macrophages. The sequence is that of Protein MGF 360-16R from African swine fever virus (strain Badajoz 1971 Vero-adapted) (Ba71V).